The following is a 1036-amino-acid chain: uncharacterized protein (1036 aa).

2 helical membrane-spanning segments follow: residues 4 to 24 (YLFI…NASL) and 1004 to 1024 (ILWV…VLFL).

It belongs to the MG414/MG415 family.

Its subcellular location is the cell membrane. This is an uncharacterized protein from Mycoplasma genitalium (strain ATCC 33530 / DSM 19775 / NCTC 10195 / G37) (Mycoplasmoides genitalium).